Reading from the N-terminus, the 777-residue chain is Degenerin unc-8 (777 aa).

Topologically, residues 1–128 (MSPLLTWNLI…VATSSFFGRY (128 aa)) are cytoplasmic. The chain crosses the membrane as a helical span at residues 129-149 (VWAALFMCMLMAFLLQTYWTM). At 150 to 689 (SEYLQYRTII…KETAGYTLVN (540 aa)) the chain is on the extracellular side. Residues N274, N319, N357, N411, N453, N533, and N597 are each glycosylated (N-linked (GlcNAc...) asparagine). A helical membrane pass occupies residues 690-710 (LFSDFGGNIGLWIGFSVITFA). Residues 711 to 777 (EFAELFCEIC…NESTKELMSK (67 aa)) are Cytoplasmic-facing. A disordered region spans residues 752–777 (QRSPKKSQPGEDEVSTNESTKELMSK).

It belongs to the amiloride-sensitive sodium channel (TC 1.A.6) family.

It localises to the membrane. Its function is as follows. Sodium permeable non-voltage-sensitive ion channel. Involved in the activity-dependent removal of selected presynaptic proteins, such as synaptobrevin snb-1, and Ras-related rab-3, in the remodeling of GABAergic motor neurons. The sequence is that of Degenerin unc-8 from Caenorhabditis elegans.